Here is a 188-residue protein sequence, read N- to C-terminus: Elongation factor P (188 aa).

It belongs to the elongation factor P family.

Its subcellular location is the cytoplasm. It functions in the pathway protein biosynthesis; polypeptide chain elongation. Its function is as follows. Involved in peptide bond synthesis. Stimulates efficient translation and peptide-bond synthesis on native or reconstituted 70S ribosomes in vitro. Probably functions indirectly by altering the affinity of the ribosome for aminoacyl-tRNA, thus increasing their reactivity as acceptors for peptidyl transferase. In Streptomyces coelicolor (strain ATCC BAA-471 / A3(2) / M145), this protein is Elongation factor P.